Here is a 218-residue protein sequence, read N- to C-terminus: Protein-L-isoaspartate O-methyltransferase (218 aa).

S60 is an active-site residue.

Belongs to the methyltransferase superfamily. L-isoaspartyl/D-aspartyl protein methyltransferase family.

It is found in the cytoplasm. The catalysed reaction is [protein]-L-isoaspartate + S-adenosyl-L-methionine = [protein]-L-isoaspartate alpha-methyl ester + S-adenosyl-L-homocysteine. In terms of biological role, catalyzes the methyl esterification of L-isoaspartyl residues in peptides and proteins that result from spontaneous decomposition of normal L-aspartyl and L-asparaginyl residues. It plays a role in the repair and/or degradation of damaged proteins. The chain is Protein-L-isoaspartate O-methyltransferase from Roseiflexus castenholzii (strain DSM 13941 / HLO8).